Reading from the N-terminus, the 403-residue chain is High affinity transport system protein p37 (403 aa).

A signal peptide spans 1-23 (MLKKLKNFILFSSIFSPIAFAIS). A lipid anchor (N-palmitoyl cysteine) is attached at cysteine 24. Cysteine 24 carries S-diacylglycerol cysteine lipidation.

It localises to the cell membrane. In terms of biological role, P37 is part of a high-affinity transport system. This is High affinity transport system protein p37 (p37) from Mesomycoplasma hyorhinis (Mycoplasma hyorhinis).